Consider the following 92-residue polypeptide: DNA-directed RNA polymerase subunit Rpo11 (92 aa).

It belongs to the archaeal Rpo11/eukaryotic RPB11/RPC19 RNA polymerase subunit family. Part of the 13-subunit RNA polymerase complex.

It is found in the cytoplasm. It catalyses the reaction RNA(n) + a ribonucleoside 5'-triphosphate = RNA(n+1) + diphosphate. In terms of biological role, DNA-dependent RNA polymerase (RNAP) catalyzes the transcription of DNA into RNA using the four ribonucleoside triphosphates as substrates. This chain is DNA-directed RNA polymerase subunit Rpo11, found in Saccharolobus solfataricus (strain ATCC 35092 / DSM 1617 / JCM 11322 / P2) (Sulfolobus solfataricus).